A 312-amino-acid polypeptide reads, in one-letter code: Ribosomal RNA small subunit methyltransferase H (312 aa).

S-adenosyl-L-methionine contacts are provided by residues Gly-35 to His-37, Asp-55, Phe-79, Asp-100, and Gln-107. The disordered stretch occupies residues Leu-279–Ala-312.

The protein belongs to the methyltransferase superfamily. RsmH family.

Its subcellular location is the cytoplasm. It catalyses the reaction cytidine(1402) in 16S rRNA + S-adenosyl-L-methionine = N(4)-methylcytidine(1402) in 16S rRNA + S-adenosyl-L-homocysteine + H(+). Specifically methylates the N4 position of cytidine in position 1402 (C1402) of 16S rRNA. The polypeptide is Ribosomal RNA small subunit methyltransferase H (Aromatoleum aromaticum (strain DSM 19018 / LMG 30748 / EbN1) (Azoarcus sp. (strain EbN1))).